The primary structure comprises 91 residues: PqqA binding protein (91 aa).

This sequence belongs to the PqqD family. Monomer. Interacts with PqqE.

It functions in the pathway cofactor biosynthesis; pyrroloquinoline quinone biosynthesis. Functionally, functions as a PqqA binding protein and presents PqqA to PqqE, in the pyrroloquinoline quinone (PQQ) biosynthetic pathway. This Pseudomonas fluorescens (strain Pf0-1) protein is PqqA binding protein.